The chain runs to 661 residues: Vasorin (661 aa).

The signal sequence occupies residues Met-1–Thr-19. The region spanning Glu-20–Pro-50 is the LRRNT domain. The Extracellular segment spans residues Glu-20–Thr-563. LRR repeat units follow at residues Thr-52 to Gly-72, Gly-75 to Asn-96, Asn-99 to Gly-120, Arg-123 to Gly-144, Ser-147 to His-168, Leu-169 to Ala-189, Asn-191 to Gly-212, Asn-215 to Thr-237, Lys-238 to Leu-258, and Pro-259 to Ser-281. Residue Asn-99 is glycosylated (N-linked (GlcNAc...) asparagine). Positions Asn-293–Ala-346 constitute an LRRCT domain. Low complexity predominate over residues Thr-348–Thr-385. Residues Thr-348–Thr-395 form a disordered region. Residues Glu-403 to Glu-440 enclose the EGF-like domain. 3 cysteine pairs are disulfide-bonded: Cys-407–Cys-418, Cys-412–Cys-428, and Cys-430–Cys-439. In terms of domain architecture, Fibronectin type-III spans Glu-455 to Thr-543. N-linked (GlcNAc...) asparagine glycosylation is found at Asn-518 and Asn-561. The chain crosses the membrane as a helical span at residues Leu-564–Ala-584. The Cytoplasmic portion of the chain corresponds to Cys-585–Phe-661. The disordered stretch occupies residues Lys-591–Phe-661. Residues Asp-606–Glu-623 are compositionally biased toward basic and acidic residues.

The protein localises to the membrane. Its function is as follows. May act as an inhibitor of TGF-beta signaling. This chain is Vasorin (vasn), found in Xenopus tropicalis (Western clawed frog).